Consider the following 1491-residue polypeptide: Membrane-associated guanylate kinase, WW and PDZ domain-containing protein 1 (1491 aa).

Residues 17–105 (ECTVKRGPQG…AVTFKAVRQG (89 aa)) enclose the PDZ 1 domain. The Guanylate kinase-like domain occupies 96 to 287 (AVTFKAVRQG…APITDPSQKF (192 aa)). Position 103 to 110 (103 to 110 (RQGGRLNK)) interacts with ATP. Residues 236-267 (AENEEEDDVPEMNSSFTADSGEQEEHTLQETA) are disordered. The 34-residue stretch at 300-333 (GPLPENWEMAYTENGEVYFIDHNTKTTSWLDPRC) folds into the WW 1 domain. Ser-357 bears the Phosphoserine mark. One can recognise a WW 2 domain in the interval 359-392 (LELPAGWEKIEDPVYGIYYVDHINRKTQYENPVL). The segment covering 411–421 (QQQQQQQQQQQ) has biased composition (low complexity). A disordered region spans residues 411–462 (QQQQQQQQQQQTEEWTEDHSALVPPVIPNHPPSNPEPAREVPLQGKPFFTRN). The segment covering 435–445 (PVIPNHPPSNP) has biased composition (pro residues). Positions 472-554 (HTKLRKSSRG…GASVDLELCR (83 aa)) constitute a PDZ 2 domain. Residues 586-600 (QETYDSPASHSSKTG) are compositionally biased toward polar residues. Disordered stretches follow at residues 586–623 (QETY…SSHG), 720–832 (QRGG…FGEC), and 932–987 (TENE…GGGS). One can recognise a PDZ 3 domain in the interval 643-721 (TVHIVKGPMG…GSEVTLLVQR (79 aa)). Phosphoserine occurs at positions 730 and 741. The segment covering 742–752 (QNSSQHSVSSH) has biased composition (low complexity). Polar residues predominate over residues 756 to 766 (HTASPSHSTQV). Ser-800 carries the phosphoserine modification. Residues 813–895 (SGLSKGERER…DELICVDGTP (83 aa)) enclose the PDZ 4 domain. Residues 939-951 (PASSHHSSNQPAS) are compositionally biased toward polar residues. The 97-residue stretch at 970–1066 (SSGSGSTSGI…DRILAVNGCS (97 aa)) folds into the PDZ 5 domain. The tract at residues 970–1066 (SSGSGSTSGI…DRILAVNGCS (97 aa)) is interaction with FCHSD2. A compositionally biased stretch (gly residues) spans 975–987 (STSGIGSGGGGGS). At Ser-1071 the chain carries Phosphoserine. Residues 1112 to 1130 (TTTHTPSQQGTQETRNTTK) are compositionally biased toward polar residues. 2 disordered regions span residues 1112–1143 (TTTH…KAPQ) and 1234–1491 (DGSV…DLSI). Residues 1124 to 1206 (ETRNTTKPKQ…DEILEINGET (83 aa)) enclose the PDZ 6 domain. Composition is skewed to basic and acidic residues over residues 1278 to 1338 (DLHK…DAQA), 1354 to 1396 (KRRE…DGSP), and 1403 to 1491 (LERL…DLSI). A phosphoserine mark is found at Ser-1361 and Ser-1412.

In terms of assembly, part of a complex composed of AMOTL2, MAGI1 and CDH5, within the complex AMOTL2 acts as a scaffold protein for the interaction of MAGI1 with CDH5. The complex is required for coupling actin fibers to cell junctions in endothelial cells. Interacts through its WW 2 domain with SYNPO and through its PDZ 5 domain with ACTN4. Interacts with cytoplasmic domain of ADGRB1. Interacts via its WW domains with DRPLA. Interacts with ESAM, LRP2 and CXADR. May interact with CTNNB1. Interacts through its PDZ 1 domain with NET1. Interacts with ASIC3 and AMOT. Interacts with FCHSD2. Interacts with IGSF5/JAM4 and through its PDZ 2 and 3 domains with NPHS1 forming a tripartite complex. Interacts with DDN. Interacts with DLL1. Interacts with KCNJ10 and possibly with KCNJ10/KCNJ16 heterodimer; this interaction may facilitate KCNJ10/KCNJ16 potassium channel expression at the basolateral membrane in kidney tubular cells. Interacts with PRRG4 (via cytoplasmic domain). Interacts (via PDZ domain) with RAPGEF2. In terms of tissue distribution, widely expressed with the exception of skeletal muscle. Isoform 1, isoform 2 and isoform 6 are highly expressed in colon, kidney, lung, liver, and pancreas. Isoform 5 is predominantly expressed in brain and heart. Isoform 3 and isoform 4 are highly expressed in pancreas and brain.

Its subcellular location is the cell junction. It is found in the tight junction. It localises to the cell membrane. Plays a role in coupling actin fibers to cell junctions in endothelial cells, via its interaction with AMOTL2 and CDH5. May regulate acid-induced ASIC3 currents by modulating its expression at the cell surface. This Homo sapiens (Human) protein is Membrane-associated guanylate kinase, WW and PDZ domain-containing protein 1 (MAGI1).